The sequence spans 571 residues: Phosphoenolpyruvate-protein phosphotransferase (571 aa).

His-207 serves as the catalytic Tele-phosphohistidine intermediate. Residues Arg-312 and Arg-348 each coordinate phosphoenolpyruvate. Mg(2+)-binding residues include Glu-435 and Asp-459. Phosphoenolpyruvate contacts are provided by residues 458–459 and Arg-469; that span reads ND. The Proton donor role is filled by Cys-506.

The protein belongs to the PEP-utilizing enzyme family. As to quaternary structure, homodimer. It depends on Mg(2+) as a cofactor.

The protein localises to the cytoplasm. The catalysed reaction is L-histidyl-[protein] + phosphoenolpyruvate = N(pros)-phospho-L-histidyl-[protein] + pyruvate. Its function is as follows. General (non sugar-specific) component of the phosphoenolpyruvate-dependent sugar phosphotransferase system (sugar PTS). This major carbohydrate active-transport system catalyzes the phosphorylation of incoming sugar substrates concomitantly with their translocation across the cell membrane. Enzyme I transfers the phosphoryl group from phosphoenolpyruvate (PEP) to the phosphoryl carrier protein (HPr). The polypeptide is Phosphoenolpyruvate-protein phosphotransferase (ptsI) (Chlamydia trachomatis serovar D (strain ATCC VR-885 / DSM 19411 / UW-3/Cx)).